The following is a 398-amino-acid chain: uncharacterized protein (398 aa).

2 helical membrane-spanning segments follow: residues 31–51 and 56–76; these read VVFSASLSLIIGLITGCCLLF and AFITSGICLALLVSVISFFGC.

This sequence belongs to the chlamydial CPn_0129/CT_036/TC_0306 family.

The protein localises to the cell membrane. This is an uncharacterized protein from Chlamydia muridarum (strain MoPn / Nigg).